Reading from the N-terminus, the 110-residue chain is Large ribosomal subunit protein uL22 (110 aa).

The protein belongs to the universal ribosomal protein uL22 family. Part of the 50S ribosomal subunit.

In terms of biological role, this protein binds specifically to 23S rRNA; its binding is stimulated by other ribosomal proteins, e.g. L4, L17, and L20. It is important during the early stages of 50S assembly. It makes multiple contacts with different domains of the 23S rRNA in the assembled 50S subunit and ribosome. Its function is as follows. The globular domain of the protein is located near the polypeptide exit tunnel on the outside of the subunit, while an extended beta-hairpin is found that lines the wall of the exit tunnel in the center of the 70S ribosome. This chain is Large ribosomal subunit protein uL22, found in Verminephrobacter eiseniae (strain EF01-2).